Here is a 653-residue protein sequence, read N- to C-terminus: tRNA 5-methylaminomethyl-2-thiouridine biosynthesis bifunctional protein MnmC (653 aa).

The segment at 1–233 (MKTAPITPGR…KRDITVARFT (233 aa)) is tRNA (mnm(5)s(2)U34)-methyltransferase. The tract at residues 258–653 (IGAGLAGCAA…YALPRWRSDS (396 aa)) is FAD-dependent cmnm(5)s(2)U34 oxidoreductase.

In the N-terminal section; belongs to the methyltransferase superfamily. tRNA (mnm(5)s(2)U34)-methyltransferase family. The protein in the C-terminal section; belongs to the DAO family. It depends on FAD as a cofactor.

It is found in the cytoplasm. It catalyses the reaction 5-aminomethyl-2-thiouridine(34) in tRNA + S-adenosyl-L-methionine = 5-methylaminomethyl-2-thiouridine(34) in tRNA + S-adenosyl-L-homocysteine + H(+). Functionally, catalyzes the last two steps in the biosynthesis of 5-methylaminomethyl-2-thiouridine (mnm(5)s(2)U) at the wobble position (U34) in tRNA. Catalyzes the FAD-dependent demodification of cmnm(5)s(2)U34 to nm(5)s(2)U34, followed by the transfer of a methyl group from S-adenosyl-L-methionine to nm(5)s(2)U34, to form mnm(5)s(2)U34. This is tRNA 5-methylaminomethyl-2-thiouridine biosynthesis bifunctional protein MnmC from Methylibium petroleiphilum (strain ATCC BAA-1232 / LMG 22953 / PM1).